Consider the following 375-residue polypeptide: 23S rRNA (uracil(747)-C(5))-methyltransferase RlmC (375 aa).

Positions 3, 11, 14, and 87 each coordinate [4Fe-4S] cluster. 4 residues coordinate S-adenosyl-L-methionine: Gln212, Phe241, Glu262, and Asn307. Catalysis depends on Cys334, which acts as the Nucleophile.

This sequence belongs to the class I-like SAM-binding methyltransferase superfamily. RNA M5U methyltransferase family. RlmC subfamily.

The catalysed reaction is uridine(747) in 23S rRNA + S-adenosyl-L-methionine = 5-methyluridine(747) in 23S rRNA + S-adenosyl-L-homocysteine + H(+). Catalyzes the formation of 5-methyl-uridine at position 747 (m5U747) in 23S rRNA. In Vibrio cholerae serotype O1 (strain ATCC 39541 / Classical Ogawa 395 / O395), this protein is 23S rRNA (uracil(747)-C(5))-methyltransferase RlmC.